The sequence spans 318 residues: Probable aminopeptidase YbaC (318 aa).

The active-site Nucleophile is serine 115. Residue aspartate 266 is part of the active site. Catalysis depends on histidine 296, which acts as the Proton donor.

It belongs to the peptidase S33 family.

Its function is as follows. Probable aminopeptidase. The protein is Probable aminopeptidase YbaC (ybaC) of Bacillus subtilis (strain 168).